A 187-amino-acid chain; its full sequence is Peptide deformylase (187 aa).

2 residues coordinate Fe cation: cysteine 107 and histidine 149. Glutamate 150 is a catalytic residue. Histidine 153 serves as a coordination point for Fe cation.

The protein belongs to the polypeptide deformylase family. The cofactor is Fe(2+).

The enzyme catalyses N-terminal N-formyl-L-methionyl-[peptide] + H2O = N-terminal L-methionyl-[peptide] + formate. Its function is as follows. Removes the formyl group from the N-terminal Met of newly synthesized proteins. Requires at least a dipeptide for an efficient rate of reaction. N-terminal L-methionine is a prerequisite for activity but the enzyme has broad specificity at other positions. The sequence is that of Peptide deformylase from Microchaete diplosiphon (Fremyella diplosiphon).